The sequence spans 323 residues: Ribose-phosphate pyrophosphokinase (323 aa).

Residues 38-40 (DGE) and 96-97 (RQ) each bind ATP. Positions 130 and 170 each coordinate Mg(2+). The active site involves lysine 193. D-ribose 5-phosphate contacts are provided by residues arginine 195, aspartate 219, and 223 to 227 (DTAGT).

It belongs to the ribose-phosphate pyrophosphokinase family. Class I subfamily. As to quaternary structure, homohexamer. Requires Mg(2+) as cofactor.

The protein localises to the cytoplasm. The enzyme catalyses D-ribose 5-phosphate + ATP = 5-phospho-alpha-D-ribose 1-diphosphate + AMP + H(+). It participates in metabolic intermediate biosynthesis; 5-phospho-alpha-D-ribose 1-diphosphate biosynthesis; 5-phospho-alpha-D-ribose 1-diphosphate from D-ribose 5-phosphate (route I): step 1/1. In terms of biological role, involved in the biosynthesis of the central metabolite phospho-alpha-D-ribosyl-1-pyrophosphate (PRPP) via the transfer of pyrophosphoryl group from ATP to 1-hydroxyl of ribose-5-phosphate (Rib-5-P). In Chlorobaculum tepidum (strain ATCC 49652 / DSM 12025 / NBRC 103806 / TLS) (Chlorobium tepidum), this protein is Ribose-phosphate pyrophosphokinase.